Reading from the N-terminus, the 275-residue chain is Beta-lactamase OXA-2 (275 aa).

A signal peptide spans 1–21; it reads MAIRIFAILFSIFSLATFAHA. S72 functions as the Acyl-ester intermediate in the catalytic mechanism. The residue at position 75 (K75) is an N6-carboxylysine. 210–212 is a binding site for substrate; that stretch reads KTG.

The protein belongs to the class-D beta-lactamase family.

It catalyses the reaction a beta-lactam + H2O = a substituted beta-amino acid. Its function is as follows. This is an oxacillin-hydrolyzing beta-lactamase. This is Beta-lactamase OXA-2 (bla) from Escherichia coli.